We begin with the raw amino-acid sequence, 98 residues long: Phosphoribosyl-ATP pyrophosphatase (98 aa).

It belongs to the PRA-PH family.

The protein localises to the cytoplasm. The enzyme catalyses 1-(5-phospho-beta-D-ribosyl)-ATP + H2O = 1-(5-phospho-beta-D-ribosyl)-5'-AMP + diphosphate + H(+). The protein operates within amino-acid biosynthesis; L-histidine biosynthesis; L-histidine from 5-phospho-alpha-D-ribose 1-diphosphate: step 2/9. This is Phosphoribosyl-ATP pyrophosphatase from Pelotomaculum thermopropionicum (strain DSM 13744 / JCM 10971 / SI).